A 260-amino-acid chain; its full sequence is Hydroxypyruvate/pyruvate aldolase Bphyt_0320 (260 aa).

His-48 serves as the catalytic Proton acceptor. A divalent metal cation contacts are provided by Glu-157 and Asp-183.

The protein belongs to the HpcH/HpaI aldolase family. Requires Mn(2+) as cofactor. Mg(2+) is required as a cofactor. The cofactor is Co(2+).

It carries out the reaction D-glyceraldehyde + 3-hydroxypyruvate = 2-dehydro-D-gluconate. The catalysed reaction is D-glyceraldehyde + pyruvate = 2-dehydro-3-deoxy-L-galactonate. The enzyme catalyses 2-dehydro-3-deoxy-D-gluconate = D-glyceraldehyde + pyruvate. Its function is as follows. Aldolase which can catalyze in vitro the aldolisation reaction between hydroxypyruvate (HPA) or pyruvate (PA) and D-glyceraldehyde (D-GA). The condensation of hydroxypyruvate and D-glyceraldehyde produces 2-dehydro-D-gluconate. The condensation of pyruvate and D-glyceraldehyde produces 2-dehydro-3-deoxy-L-galactonate as the major product and 2-dehydro-3-deoxy-D-gluconate. Also catalyzes the retro-aldol type decarboxylation of oxaloacetate, a general property of known pyruvate aldolases. The chain is Hydroxypyruvate/pyruvate aldolase Bphyt_0320 from Paraburkholderia phytofirmans (strain DSM 17436 / LMG 22146 / PsJN) (Burkholderia phytofirmans).